The sequence spans 177 residues: Large ribosomal subunit protein uL6 (177 aa).

The protein belongs to the universal ribosomal protein uL6 family. Part of the 50S ribosomal subunit.

Functionally, this protein binds to the 23S rRNA, and is important in its secondary structure. It is located near the subunit interface in the base of the L7/L12 stalk, and near the tRNA binding site of the peptidyltransferase center. The chain is Large ribosomal subunit protein uL6 from Pasteurella multocida (strain Pm70).